Here is a 279-residue protein sequence, read N- to C-terminus: Replication protein A 32 kDa subunit A (279 aa).

A disordered region spans residues 1–39 (MMSFSQPDAFSPSQFTSSQNAAADSTTPSKSRGASSTMP). The segment at residues 71–145 (VRLVGLVSGK…RATAFAIRPV (75 aa)) is a DNA-binding region (OB). Residues 181–210 (GSSSSNGFSEMTTPTSVKSNPAPVLSVTNG) form a disordered region. A compositionally biased stretch (polar residues) spans 190–199 (EMTTPTSVKS).

This sequence belongs to the replication factor A protein 2 family. Heterotrimer of RPA1, RPA2 and RPA3 (canonical replication protein A complex). Interacts with RPA1A, RPA1B and RPA3. In terms of processing, phosphorylated in a cell-cycle-dependent manner (from the S phase until mitosis). In response to DNA damage, recruited to DNA-repair nuclear foci, as a hypophosphorylated form. In terms of tissue distribution, expressed in root tips, roots, shoot apical meristem (SAM), young leaves, flag leaves and ears, and at lower levels in mature leaves.

The protein resides in the nucleus. Its function is as follows. Component of the replication protein A complex (RPA) required for DNA recombination, repair and replication. The activity of RPA is mediated by single-stranded DNA binding and protein interactions. The chain is Replication protein A 32 kDa subunit A (RPA2A) from Oryza sativa subsp. japonica (Rice).